A 276-amino-acid chain; its full sequence is Small ribosomal subunit protein uS3 (276 aa).

The region spanning 39-110 (IRRETMKFFK…KINIKIKEIK (72 aa)) is the KH type-2 domain. A disordered region spans residues 218 to 243 (DAGQVINRKSSREKSEHFDRSRVDDR). Over residues 227–243 (SSREKSEHFDRSRVDDR) the composition is skewed to basic and acidic residues.

This sequence belongs to the universal ribosomal protein uS3 family. As to quaternary structure, part of the 30S ribosomal subunit. Forms a tight complex with proteins S10 and S14.

In terms of biological role, binds the lower part of the 30S subunit head. Binds mRNA in the 70S ribosome, positioning it for translation. This chain is Small ribosomal subunit protein uS3, found in Borrelia hermsii (strain HS1 / DAH).